Consider the following 117-residue polypeptide: MNKKIGAIGEQLAVHYLKNKGYRILDCNYRTRLGEIDIIAILNDTIVFVEVKTRSSGAFGTPSEAVNYKKQMTIRRVSQQYLLSNRIGEDDWNLRFDVIEVQLIEKKYKINHMENAF.

The protein belongs to the UPF0102 family.

The chain is UPF0102 protein Clos_1471 from Alkaliphilus oremlandii (strain OhILAs) (Clostridium oremlandii (strain OhILAs)).